We begin with the raw amino-acid sequence, 442 residues long: ORC1-type DNA replication protein 8 (442 aa).

Residues Val-66 to Ala-70 and Tyr-218 contribute to the ATP site.

Belongs to the CDC6/cdc18 family.

In terms of biological role, involved in regulation of DNA replication. This Haloarcula marismortui (strain ATCC 43049 / DSM 3752 / JCM 8966 / VKM B-1809) (Halobacterium marismortui) protein is ORC1-type DNA replication protein 8 (cdc6h).